A 504-amino-acid polypeptide reads, in one-letter code: Ribonuclease Y (504 aa).

The region spanning 194–279 (TVHVVSLPND…EMVEKAKQEV (86 aa)) is the KH domain. Residues 320–413 (VLKHSMEVAY…VQAADAISAA (94 aa)) form the HD domain.

This sequence belongs to the RNase Y family.

Endoribonuclease that initiates mRNA decay. The chain is Ribonuclease Y from Clostridium novyi (strain NT).